The primary structure comprises 148 residues: UPF0540 protein At1g62000 (148 aa).

The N-terminal stretch at 1–21 (MNATKFVVLLVIGILCAIVTA) is a signal peptide. Low complexity predominate over residues 123–132 (RANGKVASAS). Residues 123 to 148 (RANGKVASASRVKGSSEKKKGKGKKD) are disordered.

Belongs to the UPF0540 family.

The chain is UPF0540 protein At1g62000 from Arabidopsis thaliana (Mouse-ear cress).